Reading from the N-terminus, the 205-residue chain is Urease accessory protein UreG (205 aa).

Position 10 to 17 (10 to 17 (GPVGSGKT)) interacts with GTP.

The protein belongs to the SIMIBI class G3E GTPase family. UreG subfamily. Homodimer. UreD, UreF and UreG form a complex that acts as a GTP-hydrolysis-dependent molecular chaperone, activating the urease apoprotein by helping to assemble the nickel containing metallocenter of UreC. The UreE protein probably delivers the nickel.

The protein localises to the cytoplasm. In terms of biological role, facilitates the functional incorporation of the urease nickel metallocenter. This process requires GTP hydrolysis, probably effectuated by UreG. This Corynebacterium urealyticum (strain ATCC 43042 / DSM 7109) protein is Urease accessory protein UreG.